The sequence spans 231 residues: Small ribosomal subunit protein uS3 (231 aa).

Positions 39-107 constitute a KH type-2 domain; sequence IRKFIMKTLP…GVSLNIVEIR (69 aa).

This sequence belongs to the universal ribosomal protein uS3 family. As to quaternary structure, part of the 30S ribosomal subunit. Forms a tight complex with proteins S10 and S14.

In terms of biological role, binds the lower part of the 30S subunit head. Binds mRNA in the 70S ribosome, positioning it for translation. The protein is Small ribosomal subunit protein uS3 of Zymomonas mobilis subsp. mobilis (strain ATCC 31821 / ZM4 / CP4).